Here is a 306-residue protein sequence, read N- to C-terminus: Lipid A biosynthesis lauroyltransferase (306 aa).

Residues 17–37 (WLTWLGIGVLWLVVQLPYPVI) form a helical membrane-spanning segment. The short motif at 132 to 137 (HFLTLE) is the HXXXXD motif element.

This sequence belongs to the LpxL/LpxM/LpxP family. As to quaternary structure, monomer.

It localises to the cell inner membrane. The enzyme catalyses dodecanoyl-[ACP] + alpha-Kdo-(2-&gt;4)-alpha-Kdo-(2-&gt;6)-lipid IVA (E. coli) = alpha-Kdo-(2-&gt;4)-alpha-Kdo-(2-&gt;6)-(dodecanoyl)-lipid IVA (E. coli) + holo-[ACP]. It participates in glycolipid biosynthesis; KDO(2)-lipid A biosynthesis; KDO(2)-lipid A from CMP-3-deoxy-D-manno-octulosonate and lipid IV(A): step 3/4. It functions in the pathway bacterial outer membrane biogenesis; lipopolysaccharide biosynthesis. Its function is as follows. Catalyzes the transfer of laurate from lauroyl-[acyl-carrier-protein] (ACP) to Kdo(2)-lipid IV(A) to form Kdo(2)-(lauroyl)-lipid IV(A). Has 10 fold selectivity for lauroyl-ACP over myristoyl-ACP. In vitro, can also catalyze a slow second acylation reaction leading to the formation of Kdo(2)-(dilauroyl)-lipid IV(A). This chain is Lipid A biosynthesis lauroyltransferase, found in Escherichia coli (strain K12).